Consider the following 295-residue polypeptide: ATP synthase gamma chain (295 aa).

It belongs to the ATPase gamma chain family. F-type ATPases have 2 components, CF(1) - the catalytic core - and CF(0) - the membrane proton channel. CF(1) has five subunits: alpha(3), beta(3), gamma(1), delta(1), epsilon(1). CF(0) has three main subunits: a, b and c.

It localises to the cell inner membrane. Its function is as follows. Produces ATP from ADP in the presence of a proton gradient across the membrane. The gamma chain is believed to be important in regulating ATPase activity and the flow of protons through the CF(0) complex. The polypeptide is ATP synthase gamma chain (Campylobacter concisus (strain 13826)).